A 196-amino-acid polypeptide reads, in one-letter code: MPTPTKGPRLGGGPAHERLMLANLAAALFEHKRITTTVTKAKRLKPYAERLVTFAKRGDLASRRRVLGLISNKGVVHELFTDIAQAVENRDGGYTRITKIGNRKGDNAPMAVIELVLEPVSAKQAVVAEATSAAKRDADKKEAAAAPAAETEVAETEAAPEAEAAEAPKAEAAETEEAPAAEEAAEKPAAEEKDAK.

Positions 133 to 196 (AAKRDADKKE…KPAAEEKDAK (64 aa)) are disordered. The segment covering 134-143 (AKRDADKKEA) has biased composition (basic and acidic residues). The span at 152-164 (EVAETEAAPEAEA) shows a compositional bias: acidic residues. Over residues 184–196 (AAEKPAAEEKDAK) the composition is skewed to basic and acidic residues.

The protein belongs to the bacterial ribosomal protein bL17 family. As to quaternary structure, part of the 50S ribosomal subunit. Contacts protein L32.

The polypeptide is Large ribosomal subunit protein bL17 (Arthrobacter sp. (strain FB24)).